A 344-amino-acid polypeptide reads, in one-letter code: Lipase chaperone (344 aa).

The helical transmembrane segment at 14 to 34 threads the bilayer; it reads AVVYGAVGLAAIAGVAMWSGA. The interval 37 to 78 is disordered; it reads HGGTGASGEPPDASAARGPAAAPPQAAVPASTSLPPSLAGSS. Positions 43–78 are enriched in low complexity; sequence SGEPPDASAARGPAAAPPQAAVPASTSLPPSLAGSS.

This sequence belongs to the lipase chaperone family.

It localises to the cell inner membrane. In terms of biological role, may be involved in the folding of the extracellular lipase during its passage through the periplasm. The polypeptide is Lipase chaperone (lifO) (Burkholderia cepacia (Pseudomonas cepacia)).